A 620-amino-acid polypeptide reads, in one-letter code: Chaperone protein DnaK (620 aa).

The tract at residues 579–620 (KAQKEASAGAEASEDASGPSSTGSASDDDVVDADYEVVDEDK) is disordered. Positions 583–603 (EASAGAEASEDASGPSSTGSA) are enriched in low complexity. Over residues 604–620 (SDDDVVDADYEVVDEDK) the composition is skewed to acidic residues.

It belongs to the heat shock protein 70 family.

Acts as a chaperone. The sequence is that of Chaperone protein DnaK from Methanococcoides burtonii (strain DSM 6242 / NBRC 107633 / OCM 468 / ACE-M).